A 638-amino-acid chain; its full sequence is uncharacterized protein (638 aa).

This is an uncharacterized protein from Homo sapiens (Human).